The primary structure comprises 334 residues: L-lactate dehydrogenase B chain (334 aa).

Alanine 2 bears the N-acetylalanine mark. At lysine 7 the chain carries N6-acetyllysine. NAD(+) is bound by residues 30-58 (GQVG…LEDK) and arginine 100. The residue at position 44 (serine 44) is a Phosphoserine. Lysine 58 carries the N6-acetyllysine modification. Arginine 107 contacts substrate. Lysine 119 is subject to N6-acetyllysine. Asparagine 139 provides a ligand contact to NAD(+). Positions 139 and 170 each coordinate substrate. Histidine 194 functions as the Proton acceptor in the catalytic mechanism. A Phosphotyrosine modification is found at tyrosine 240. Residue threonine 249 coordinates substrate. Lysine 329 carries the post-translational modification N6-acetyllysine.

The protein belongs to the LDH/MDH superfamily. LDH family. Homotetramer. Interacts with PTEN upstream reading frame protein MP31; the interaction leads to inhibition of mitochondrial lactate dehydrogenase activity, preventing conversion of lactate to pyruvate in mitochondria.

It localises to the cytoplasm. It is found in the mitochondrion inner membrane. It catalyses the reaction (S)-lactate + NAD(+) = pyruvate + NADH + H(+). It functions in the pathway fermentation; pyruvate fermentation to lactate; (S)-lactate from pyruvate: step 1/1. Interconverts simultaneously and stereospecifically pyruvate and lactate with concomitant interconversion of NADH and NAD(+). The chain is L-lactate dehydrogenase B chain (Ldhb) from Rattus norvegicus (Rat).